Here is a 771-residue protein sequence, read N- to C-terminus: Glucocorticoid receptor (771 aa).

A modulating region spans residues 1 to 415 (MDLKESVTSS…STTTGPPPKL (415 aa)). Residue threonine 8 is modified to Phosphothreonine. Arginine 22 bears the Omega-N-methylarginine mark. Phosphoserine occurs at positions 44, 133, 199, 207, and 222. Residues 129–172 (SRSTSVPENPKNSASAVSGTPTEEFPKTQSDLSSEQENLKSQAG) are compositionally biased toward polar residues. Positions 129 to 184 (SRSTSVPENPKNSASAVSGTPTEEFPKTQSDLSSEQENLKSQAGTNGGNVKFPPDQ) are disordered. Residue lysine 254 forms a Glycyl lysine isopeptide (Lys-Gly) (interchain with G-Cter in SUMO2) linkage. A Phosphoserine modification is found at serine 263. Glycyl lysine isopeptide (Lys-Gly) (interchain with G-Cter in SUMO); alternate cross-links involve residues lysine 273 and lysine 289. Residues lysine 273 and lysine 289 each participate in a glycyl lysine isopeptide (Lys-Gly) (interchain with G-Cter in SUMO2); alternate cross-link. Residues serine 303 and serine 400 each carry the phosphoserine modification. Residues 390–411 (SSPGLRPDVSSPPSSSSTTTGP) form a disordered region. The segment covering 400-409 (SPPSSSSTTT) has biased composition (low complexity). Residue lysine 414 forms a Glycyl lysine isopeptide (Lys-Gly) (interchain with G-Cter in ubiquitin) linkage. 2 NR C4-type zinc fingers span residues 416 to 436 (CLVCSDELSGCHYGVLTCGSC) and 452 to 476 (CAGRNDCIIDKIRRENCPACRYRKC). A DNA-binding region (nuclear receptor) is located at residues 416 to 481 (CLVCSDELSG…RYRKCLQAGM (66 aa)). 4 positions are modified to N6-acetyllysine: lysine 475, lysine 487, lysine 489, and lysine 490. An interaction with CLOCK region spans residues 480 to 771 (GMNLQARKTK…DIKKLLFHQK (292 aa)). The interval 482 to 517 (NLQARKTKKKIKGIQQATTGVSQNTSENPNKTIVPA) is hinge. Residues 518-752 (TLPQLTPTLV…FPEMLAEIIT (235 aa)) enclose the NR LBD domain. Residues 526–691 (LVSLLEVIEP…EIRMTYIKEL (166 aa)) are interaction with CRY1. Lysine 697 is covalently cross-linked (Glycyl lysine isopeptide (Lys-Gly) (interchain with G-Cter in SUMO)).

The protein belongs to the nuclear hormone receptor family. NR3 subfamily. Heteromultimeric cytoplasmic complex with HSP90AA1, HSPA1A/HSPA1B, and FKBP5 or another immunophilin such as PPID, STIP1, or the immunophilin homolog PPP5C. Upon ligand binding FKBP5 dissociates from the complex and FKBP4 takes its place, thereby linking the complex to dynein and mediating transport to the nucleus, where the complex dissociates. Probably forms a complex composed of chaperones HSP90 and HSP70, co-chaperones CDC37, PPP5C, TSC1 and client protein TSC2, CDK4, AKT, RAF1 and NR3C1; this complex does not contain co-chaperones STIP1/HOP and PTGES3/p23. Directly interacts with UNC45A. Binds to DNA as a homodimer, and as heterodimer with NR3C2 or the retinoid X receptor. Binds STAT5A and STAT5B homodimers and heterodimers. Interacts with NRIP1, POU2F1, POU2F2 and TRIM28. Interacts with several coactivator complexes, including the SMARCA4 complex, CREBBP/EP300, TADA2L (Ada complex) and p160 coactivators such as NCOA2 and NCOA6. Interaction with BAG1 inhibits transactivation. Interacts with HEXIM1 and TGFB1I1. Interacts with NCOA1. Interacts with NCOA3, SMARCA4, SMARCC1, SMARCD1, and SMARCE1. Interacts with CLOCK, CRY1 and CRY2 in a ligand-dependent fashion. Interacts with CIART. Interacts with RWDD3. Interacts with UBE2I/UBC9 and this interaction is enhanced in the presence of RWDD3. Interacts with GRIP1. Interacts with NR4A3 (via nuclear receptor DNA-binding domain), represses transcription activity of NR4A3 on the POMC promoter Nur response element (NurRE). Directly interacts with PNRC2 to attract and form a complex with UPF1 and DCP1A; the interaction leads to rapid mRNA degradation. Interacts with GSK3B. Interacts with FNIP1 and FNIP2. Interacts (via C-terminus) with HNRNPU (via C-terminus). Interacts with MCM3AP. Interacts (via domain NR LBD) with HSP90AA1 and HSP90AB1. In the absence of hormonal ligand, interacts with TACC1. Interacts (via NR LBD domain) with ZNF764 (via KRAB domain); the interaction regulates transcription factor activity of NR3C1 by directing its actions toward certain biologic pathways. In terms of processing, acetylation by CLOCK reduces its binding to glucocorticoid response elements and its transcriptional activity. Increased proteasome-mediated degradation in response to glucocorticoids. Post-translationally, phosphorylated in the absence of hormone; becomes hyperphosphorylated in the presence of glucocorticoid. The Ser-199, Ser-222 and Ser-400-phosphorylated forms are mainly cytoplasmic, and the Ser-207-phosphorylated form is nuclear. Phosphorylation at Ser-207 increases transcriptional activity. Phosphorylation at Ser-199, Ser-222 and Ser-400 decreases signaling capacity. Phosphorylation at Ser-400 may protect from glucocorticoid-induced apoptosis. Phosphorylation at Ser-199 and Ser-207 is not required in regulation of chromosome segregation. May be dephosphorylated by PPP5C, attenuates NR3C1 action. In terms of processing, ubiquitinated by UBR5, leading to its degradation: UBR5 specifically recognizes and binds ligand-bound NR3C1 when it is not associated with coactivators (NCOAs). In presence of NCOAs, the UBR5-degron is not accessible, preventing its ubiquitination and degradation. Sumoylation at Lys-273 and Lys-289 negatively regulates its transcriptional activity. Sumoylation at Lys-697 positively regulates its transcriptional activity in the presence of RWDD3. Sumoylation at Lys-273 and Lys-289 is dispensable whereas sumoylation at Lys-697 is critical for the stimulatory effect of RWDD3 on its transcriptional activity. Heat shock increases sumoylation in a RWDD3-dependent manner.

It localises to the cytoplasm. Its subcellular location is the nucleus. The protein resides in the mitochondrion. It is found in the cytoskeleton. The protein localises to the spindle. It localises to the microtubule organizing center. Its subcellular location is the centrosome. The protein resides in the chromosome. It is found in the nucleoplasm. In terms of biological role, receptor for glucocorticoids (GC). Has a dual mode of action: as a transcription factor that binds to glucocorticoid response elements (GRE), both for nuclear and mitochondrial DNA, and as a modulator of other transcription factors. Affects inflammatory responses, cellular proliferation and differentiation in target tissues. Involved in chromatin remodeling. Plays a role in rapid mRNA degradation by binding to the 5' UTR of target mRNAs and interacting with PNRC2 in a ligand-dependent manner which recruits the RNA helicase UPF1 and the mRNA-decapping enzyme DCP1A, leading to RNA decay. Could act as a coactivator for STAT5-dependent transcription upon growth hormone (GH) stimulation and could reveal an essential role of hepatic GR in the control of body growth. Mediates glucocorticoid-induced apoptosis. Promotes accurate chromosome segregation during mitosis. May act as a tumor suppressor. May play a negative role in adipogenesis through the regulation of lipolytic and antilipogenic gene expression. This chain is Glucocorticoid receptor (NR3C1), found in Cavia porcellus (Guinea pig).